The following is a 230-amino-acid chain: Putative transcription factor bHLH107 (230 aa).

The 50-residue stretch at 44–93 folds into the bHLH domain; sequence ASLRNHKEAERKRRARINSHLNKLRKLLSCNSKTDKSTLLAKVVQRVKEL.

As to quaternary structure, homodimer.

The protein localises to the nucleus. This chain is Putative transcription factor bHLH107 (BHLH107), found in Arabidopsis thaliana (Mouse-ear cress).